We begin with the raw amino-acid sequence, 486 residues long: Cysteine--tRNA ligase (486 aa).

Position 29 (Cys-29) interacts with Zn(2+). The 'HIGH' region motif lies at Val-31 to His-41. Residues Cys-214, His-239, and Glu-243 each contribute to the Zn(2+) site. The short motif at Lys-271–Ser-275 is the 'KMSKS' region element. An ATP-binding site is contributed by Lys-274.

It belongs to the class-I aminoacyl-tRNA synthetase family. As to quaternary structure, monomer. Zn(2+) is required as a cofactor.

It is found in the cytoplasm. The enzyme catalyses tRNA(Cys) + L-cysteine + ATP = L-cysteinyl-tRNA(Cys) + AMP + diphosphate. The chain is Cysteine--tRNA ligase from Nostoc sp. (strain PCC 7120 / SAG 25.82 / UTEX 2576).